The primary structure comprises 173 residues: Lectin BRA-2 (173 aa).

N39 is a glycosylation site (N-linked (GlcNAc...) asparagine). 3 cysteine pairs are disulfide-bonded: C47-C61, C78-C168, and C144-C160. One can recognise a C-type lectin domain in the interval P51–I170.

In terms of assembly, homohexamer; disulfide-linked. Coelemic fluid.

Sugar-binding protein which recognizes specific carbohydrate structures and agglutinates a variety of animal cells by binding to cell-surface glycoproteins and glycolipids. Calcium-dependent lectin. Invertebrate lectins may be involved in defense functions. The protein is Lectin BRA-2 of Megabalanus rosa (Acorn barnacle).